Consider the following 347-residue polypeptide: Protein RecA (347 aa).

Residue 65–72 (GPESSGKT) coordinates ATP. The span at 327-336 (KFEPTELSRE) shows a compositional bias: basic and acidic residues. The disordered stretch occupies residues 327 to 347 (KFEPTELSREEGDEDTLEDAM). Acidic residues predominate over residues 337–347 (EGDEDTLEDAM).

It belongs to the RecA family.

The protein localises to the cytoplasm. In terms of biological role, can catalyze the hydrolysis of ATP in the presence of single-stranded DNA, the ATP-dependent uptake of single-stranded DNA by duplex DNA, and the ATP-dependent hybridization of homologous single-stranded DNAs. It interacts with LexA causing its activation and leading to its autocatalytic cleavage. The sequence is that of Protein RecA from Xylella fastidiosa (strain M23).